The following is a 314-amino-acid chain: Serine acetyltransferase 1, chloroplastic (314 aa).

It belongs to the transferase hexapeptide repeat family. Homomultimer. Interacts with OASA1 and CYP20-3. Component of the cysteine synthase complex (CSC) composed of two OAS-TL dimers and one SAT hexamer. Mostly expressed in leaves. Localized in cortex, trichomes and vascular tissues, particularly in phloem.

The protein resides in the plastid. The protein localises to the chloroplast. It localises to the cytoplasm. The catalysed reaction is L-serine + acetyl-CoA = O-acetyl-L-serine + CoA. It functions in the pathway amino-acid biosynthesis; L-cysteine biosynthesis; L-cysteine from L-serine: step 1/2. Its function is as follows. Serine acetyltransferase which catalyzes the formation of O-acetyl-L-serine from acetyl-CoA and L-serine. Also displays O-acetylserine (thio1)-lyase activity in vitro. May be involved in detoxification process by mediating the production of glutathione. This is Serine acetyltransferase 1, chloroplastic (SAT1) from Arabidopsis thaliana (Mouse-ear cress).